A 504-amino-acid chain; its full sequence is Ribose import ATP-binding protein RbsA 3 (504 aa).

2 consecutive ABC transporter domains span residues 6-238 (ANLK…VGRP) and 251-494 (IGAE…MMGG). Position 38–45 (38–45 (GENGAGKS)) interacts with ATP.

This sequence belongs to the ABC transporter superfamily. Ribose importer (TC 3.A.1.2.1) family. As to quaternary structure, the complex is composed of an ATP-binding protein (RbsA), two transmembrane proteins (RbsC) and a solute-binding protein (RbsB).

The protein resides in the cell inner membrane. It catalyses the reaction D-ribose(out) + ATP + H2O = D-ribose(in) + ADP + phosphate + H(+). Functionally, part of the ABC transporter complex RbsABC involved in ribose import. Responsible for energy coupling to the transport system. The polypeptide is Ribose import ATP-binding protein RbsA 3 (Rhizobium meliloti (strain 1021) (Ensifer meliloti)).